A 316-amino-acid polypeptide reads, in one-letter code: Transaldolase (316 aa).

Residue K125 is the Schiff-base intermediate with substrate of the active site.

The protein belongs to the transaldolase family. Type 1 subfamily. In terms of assembly, homodimer.

It localises to the cytoplasm. It catalyses the reaction D-sedoheptulose 7-phosphate + D-glyceraldehyde 3-phosphate = D-erythrose 4-phosphate + beta-D-fructose 6-phosphate. It participates in carbohydrate degradation; pentose phosphate pathway; D-glyceraldehyde 3-phosphate and beta-D-fructose 6-phosphate from D-ribose 5-phosphate and D-xylulose 5-phosphate (non-oxidative stage): step 2/3. Its function is as follows. Transaldolase is important for the balance of metabolites in the pentose-phosphate pathway. The chain is Transaldolase from Acidovorax sp. (strain JS42).